A 728-amino-acid polypeptide reads, in one-letter code: 1,4-alpha-glucan branching enzyme GlgB (728 aa).

Asp405 acts as the Nucleophile in catalysis. Residue Glu458 is the Proton donor of the active site.

It belongs to the glycosyl hydrolase 13 family. GlgB subfamily. In terms of assembly, monomer.

It carries out the reaction Transfers a segment of a (1-&gt;4)-alpha-D-glucan chain to a primary hydroxy group in a similar glucan chain.. Its pathway is glycan biosynthesis; glycogen biosynthesis. Catalyzes the formation of the alpha-1,6-glucosidic linkages in glycogen by scission of a 1,4-alpha-linked oligosaccharide from growing alpha-1,4-glucan chains and the subsequent attachment of the oligosaccharide to the alpha-1,6 position. In Serratia proteamaculans (strain 568), this protein is 1,4-alpha-glucan branching enzyme GlgB.